Here is a 537-residue protein sequence, read N- to C-terminus: MTETGVRNGAYGADKFGLKNLAGVTWNPGAPQLYEYALRAGEGVLSADGALCVDTGIFTGRSPKDKYTVRDANTESTVWWGGNQSITAEQFETLYQDFLKHAEGMQLFAQDLYGGADPSFQIKTRVFTEMAWHSLFIRTLLRRPETAALASFVPELTIIDLASFRADPKRHGCQSENVVAIDFTRKIVLIGGTQYAGEMKKSVFTTLNYYLPDKGVLPMHCSANVGPDGDTAIFFGLSGTGKTTLSADPNRTLIGDDEHGWGKDGVFNFEGGCYAKCIKLSAEAEPEIFAASNRFGAILENTVLDPITRKPDFNDGSKTENTRSAYPLESIPNASLTGRAGLPKNVVMLAADAFGVMPPIAKLTPAQAMYHFLSGYTAKVAGTERGVTEPSPVFSTCFGSPFLPRDPSVYGNMLRELIAKHGVDCWLVNTGWTGGIYGTGSRMPIKVTRALLTAALNGSLRNVEFRTDPYFGFAVPTALPGVPSDILDPVKTWADKAAFDVTARKLVGMFQKNFSKFEAMVDAEVRAAQPEAKLAAE.

Positions 61, 195, and 201 each coordinate substrate. Residues K201, H220, and G236–T244 each bind ATP. Mn(2+)-binding residues include K201 and H220. D257 contacts Mn(2+). Residues E285, R323, and T448 each coordinate ATP. R323 is a substrate binding site.

This sequence belongs to the phosphoenolpyruvate carboxykinase (ATP) family. It depends on Mn(2+) as a cofactor.

It is found in the cytoplasm. The catalysed reaction is oxaloacetate + ATP = phosphoenolpyruvate + ADP + CO2. It functions in the pathway carbohydrate biosynthesis; gluconeogenesis. In terms of biological role, involved in the gluconeogenesis. Catalyzes the conversion of oxaloacetate (OAA) to phosphoenolpyruvate (PEP) through direct phosphoryl transfer between the nucleoside triphosphate and OAA. The polypeptide is Phosphoenolpyruvate carboxykinase (ATP) (Rhodopseudomonas palustris (strain BisA53)).